The following is a 317-amino-acid chain: Acetyl-coenzyme A carboxylase carboxyl transferase subunit alpha (317 aa).

Residues 39–293 form the CoA carboxyltransferase C-terminal domain; it reads RLKKKSISLT…KTSLAQGVAE (255 aa).

It belongs to the AccA family. As to quaternary structure, acetyl-CoA carboxylase is a heterohexamer composed of biotin carboxyl carrier protein (AccB), biotin carboxylase (AccC) and two subunits each of ACCase subunit alpha (AccA) and ACCase subunit beta (AccD).

It localises to the cytoplasm. The catalysed reaction is N(6)-carboxybiotinyl-L-lysyl-[protein] + acetyl-CoA = N(6)-biotinyl-L-lysyl-[protein] + malonyl-CoA. It participates in lipid metabolism; malonyl-CoA biosynthesis; malonyl-CoA from acetyl-CoA: step 1/1. Functionally, component of the acetyl coenzyme A carboxylase (ACC) complex. First, biotin carboxylase catalyzes the carboxylation of biotin on its carrier protein (BCCP) and then the CO(2) group is transferred by the carboxyltransferase to acetyl-CoA to form malonyl-CoA. The chain is Acetyl-coenzyme A carboxylase carboxyl transferase subunit alpha from Marinobacter nauticus (strain ATCC 700491 / DSM 11845 / VT8) (Marinobacter aquaeolei).